Here is a 921-residue protein sequence, read N- to C-terminus: Isoleucine--tRNA ligase (921 aa).

Positions proline 57–histidine 67 match the 'HIGH' region motif. Residue glutamate 552 coordinates L-isoleucyl-5'-AMP. Positions lysine 593–serine 597 match the 'KMSKS' region motif. ATP is bound at residue lysine 596. 4 residues coordinate Zn(2+): cysteine 887, cysteine 890, cysteine 907, and cysteine 910.

The protein belongs to the class-I aminoacyl-tRNA synthetase family. IleS type 1 subfamily. In terms of assembly, monomer. The cofactor is Zn(2+).

The protein resides in the cytoplasm. It carries out the reaction tRNA(Ile) + L-isoleucine + ATP = L-isoleucyl-tRNA(Ile) + AMP + diphosphate. Its function is as follows. Catalyzes the attachment of isoleucine to tRNA(Ile). As IleRS can inadvertently accommodate and process structurally similar amino acids such as valine, to avoid such errors it has two additional distinct tRNA(Ile)-dependent editing activities. One activity is designated as 'pretransfer' editing and involves the hydrolysis of activated Val-AMP. The other activity is designated 'posttransfer' editing and involves deacylation of mischarged Val-tRNA(Ile). The protein is Isoleucine--tRNA ligase of Halalkalibacterium halodurans (strain ATCC BAA-125 / DSM 18197 / FERM 7344 / JCM 9153 / C-125) (Bacillus halodurans).